We begin with the raw amino-acid sequence, 1263 residues long: Histone-lysine N-methyltransferase EHMT2 (1263 aa).

2 disordered regions span residues 1–314 and 332–439; these read MRGL…LEEW and DERV…EYME. Residues 26–39 are compositionally biased toward basic residues; the sequence is GRGRGGAHRGRGRP. Asymmetric dimethylarginine is present on arginine 40. Over residues 83-95 the composition is skewed to basic and acidic residues; sequence LEKEPRGAAERVH. Serine 97 is subject to Phosphoserine. Position 101 is a phosphothreonine (threonine 101). Phosphoserine occurs at positions 104 and 193. Lysine 239 is modified (N6,N6,N6-trimethyllysine; by EHMT2; alternate). Position 239 is an N6,N6-dimethyllysine; by EHMT2; alternate (lysine 239). A compositionally biased stretch (basic and acidic residues) spans 252-270; the sequence is PEKRPPEVQHFRMSDDMHL. Residues lysine 272 and lysine 282 each participate in a glycyl lysine isopeptide (Lys-Gly) (interchain with G-Cter in SUMO2) cross-link. 3 positions are modified to phosphoserine: serine 285, serine 294, and serine 298. 2 stretches are compositionally biased toward basic and acidic residues: residues 302 to 312 and 332 to 343; these read ILEKGEPRPLE and DERVDSDSKSEV. Acidic residues predominate over residues 350-380; the sequence is LSEEEEEEEEEEEEEEEEEEEEEEEEEDEES. The segment covering 391–400 has biased composition (basic residues); that stretch reads GRRKAKKKWR. Residues serine 403, serine 465, and serine 466 each carry the phosphoserine modification. Threonine 608 carries the post-translational modification Phosphothreonine. Residues 621-647 form a disordered region; that stretch reads LAHDAPGRADTSQPSARMRGHGEPRRP. Lysine 687 is covalently cross-linked (Glycyl lysine isopeptide (Lys-Gly) (interchain with G-Cter in SUMO2)). 7 ANK repeats span residues 702 to 731, 737 to 766, 770 to 799, 803 to 833, 837 to 866, 870 to 899, and 903 to 932; these read FHPR…DPNF, SKRT…NINA, QQRT…CVYS, DGST…DVNA, GGWT…DVTL, EENI…DLHA, and HGDT…NPEL. Residues 870–872 are histone H3K9me binding; that stretch reads EEN. A Pre-SET domain is found at 1025–1088; it reads QHCTCVDDCS…SCKNRVVQSG (64 aa). Positions 1027, 1029, 1033, 1038, 1040, 1070, 1074, 1076, and 1080 each coordinate Zn(2+). An SET domain is found at 1091–1208; the sequence is VRLQLYRTAK…TGEELGFDYG (118 aa). Residues 1101–1103, tyrosine 1138, and 1165–1166 each bind S-adenosyl-L-methionine; these read MGW and NH. Positions 1127-1146 are interaction with histone H3; that stretch reads DAEADVREDDSYLFDLDNKD. Cysteine 1168 serves as a coordination point for Zn(2+). Residues 1207-1210 are interaction with histone H3; sequence YGDR. One can recognise a Post-SET domain in the interval 1217–1233; that stretch reads KYFTCQCGSEKCKHSAE. The Zn(2+) site is built by cysteine 1221, cysteine 1223, and cysteine 1228. Phosphoserine is present on serine 1257. Threonine 1263 carries the post-translational modification Phosphothreonine.

It belongs to the class V-like SAM-binding methyltransferase superfamily. Histone-lysine methyltransferase family. Suvar3-9 subfamily. In terms of assembly, heterodimer; heterodimerizes with EHMT1/GLP. Interacts with GFI1B and WIZ. Part of the E2F6.com-1 complex in G0 phase composed of E2F6, MGA, MAX, TFDP1, CBX3, BAT8, EHMT1, RING1, RNF2, MBLR, L3MBTL2 and YAF2. Part of a complex composed of TRIM28, HDAC1, HDAC2 and EHMT2. Interacts with UHRF1. Interacts with CDYL. Interacts with REST only in the presence of CDYL. Part of a complex containing at least CDYL, REST, WIZ, SETB1, EHMT1 and EHMT2. Interacts with PRDM9 and CDYL; interaction only takes place when PRDM9 is bound to hotspot DNA. Interacts with SMYD5. In terms of processing, methylated at Lys-239; automethylated. As to expression, ubiquitous.

It is found in the nucleus. It localises to the chromosome. It carries out the reaction N(6)-methyl-L-lysyl(9)-[histone H3] + S-adenosyl-L-methionine = N(6),N(6)-dimethyl-L-lysyl(9)-[histone H3] + S-adenosyl-L-homocysteine + H(+). The catalysed reaction is L-lysyl(9)-[histone H3] + S-adenosyl-L-methionine = N(6)-methyl-L-lysyl(9)-[histone H3] + S-adenosyl-L-homocysteine + H(+). Histone methyltransferase that specifically mono- and dimethylates 'Lys-9' of histone H3 (H3K9me1 and H3K9me2, respectively) in euchromatin. H3K9me represents a specific tag for epigenetic transcriptional repression by recruiting HP1 proteins to methylated histones. Also mediates monomethylation of 'Lys-56' of histone H3 (H3K56me1) in G1 phase, leading to promote interaction between histone H3 and PCNA and regulating DNA replication. Also weakly methylates 'Lys-27' of histone H3 (H3K27me). Also required for DNA methylation, the histone methyltransferase activity is not required for DNA methylation, suggesting that these 2 activities function independently. Probably targeted to histone H3 by different DNA-binding proteins like E2F6, MGA, MAX and/or DP1. May also methylate histone H1. In addition to the histone methyltransferase activity, also methylates non-histone proteins: mediates dimethylation of 'Lys-373' of p53/TP53. Also methylates CDYL, WIZ, ACIN1, DNMT1, HDAC1, ERCC6, KLF12 and itself. The protein is Histone-lysine N-methyltransferase EHMT2 (Ehmt2) of Mus musculus (Mouse).